The primary structure comprises 484 residues: FAD-dependent monooxygenase aurC (484 aa).

Residues 1-21 (MGAYSFRVIIVGGSITGMTLA) form the signal peptide. Residues glutamate 35, glycine 49, and arginine 108 each coordinate FAD. Tyrosine 216 is an active-site residue. Aspartate 308 and glycine 321 together coordinate FAD. A helical membrane pass occupies residues 451 to 471 (FAVASLIVLIVVLARALDSPA).

This sequence belongs to the paxM FAD-dependent monooxygenase family. The cofactor is FAD.

It is found in the membrane. It functions in the pathway polyketide biosynthesis. In terms of biological role, FAD-dependent monooxygenase; part of the gene cluster that mediates the biosynthesis of aurovertins, fungal polyketides that exhibit potent inhibition of adenosine triphosphate synthase. Tha biosynthesis starts with the HR-PKS aurA that selects propionate as the starter unit; synthesizes a hexa-ene chain through the repeated functions of the KR and DH domains in the first six iterations; selectively introduces three alpha-methyl substitutions at C4, C6, and C16 using the S-adensylmethionine-dependent cMET; and shuts off KR and DH in the last three iterations to afford a 1,3,5-triketo portion that can undergo intramolecular cyclization to yield the alpha-pyrone intermediate. AurE may act as a cyclase and enhances the rate of pyrone formation and product release of aurA. The methyltransferase aurB then methylates the C17 hydroxyl group. C17 methylation is required to initiate epoxidation by the downstream monooxygenase aurC. The monooxygenase aurC and the epoxide hydrolase aurD can iteratively transform the terminal triene portion of the methylated precursor into the dioxabicyclo[3.2.1]octane scaffold of aurovertin E. Epoxidation modifications of the precursor occur in two separate steps; bis-epoxidation of the two terminal olefins takes place first, followed by another epoxidation that occurs at C7-C8 after tetrahydrofuran formation. The O-acyltransferase aurG converts aurovertin E to aurovertin A. The sequence is that of FAD-dependent monooxygenase aurC from Calcarisporium arbuscula (Dendryphion arbuscula).